A 406-amino-acid chain; its full sequence is NADH-ubiquinone oxidoreductase 49 kDa subunit (406 aa).

It belongs to the complex I 49 kDa subunit family. As to quaternary structure, complex I is composed of 45 different subunits. Component of the iron-sulfur (IP) fragment of the enzyme.

Its subcellular location is the mitochondrion inner membrane. The enzyme catalyses a ubiquinone + NADH + 5 H(+)(in) = a ubiquinol + NAD(+) + 4 H(+)(out). Core subunit of the mitochondrial membrane respiratory chain NADH dehydrogenase (Complex I) that is believed to belong to the minimal assembly required for catalysis. Complex I functions in the transfer of electrons from NADH to the respiratory chain. The immediate electron acceptor for the enzyme is believed to be ubiquinone. This Dictyostelium citrinum (Slime mold) protein is NADH-ubiquinone oxidoreductase 49 kDa subunit (nad7).